Consider the following 460-residue polypeptide: ATP synthase subunit beta (460 aa).

Residue 150-157 (GGAGVGKT) participates in ATP binding.

The protein belongs to the ATPase alpha/beta chains family. F-type ATPases have 2 components, CF(1) - the catalytic core - and CF(0) - the membrane proton channel. CF(1) has five subunits: alpha(3), beta(3), gamma(1), delta(1), epsilon(1). CF(0) has three main subunits: a(1), b(2) and c(9-12). The alpha and beta chains form an alternating ring which encloses part of the gamma chain. CF(1) is attached to CF(0) by a central stalk formed by the gamma and epsilon chains, while a peripheral stalk is formed by the delta and b chains.

It localises to the cell inner membrane. It catalyses the reaction ATP + H2O + 4 H(+)(in) = ADP + phosphate + 5 H(+)(out). In terms of biological role, produces ATP from ADP in the presence of a proton gradient across the membrane. The catalytic sites are hosted primarily by the beta subunits. The sequence is that of ATP synthase subunit beta from Pectobacterium carotovorum subsp. carotovorum (strain PC1).